Consider the following 366-residue polypeptide: tRNA pseudouridine synthase B (366 aa).

Asp-44 acts as the Nucleophile in catalysis.

The protein belongs to the pseudouridine synthase TruB family. Type 1 subfamily.

It catalyses the reaction uridine(55) in tRNA = pseudouridine(55) in tRNA. Functionally, responsible for synthesis of pseudouridine from uracil-55 in the psi GC loop of transfer RNAs. The sequence is that of tRNA pseudouridine synthase B from Treponema pallidum (strain Nichols).